Consider the following 83-residue polypeptide: ATP synthase subunit c 2 (83 aa).

A run of 2 helical transmembrane segments spans residues 8–28 and 58–78; these read IASILGAAFAVGIGSLGPALG and LAMIETMAIYCLVIALLLLFA.

The protein belongs to the ATPase C chain family. F-type ATPases have 2 components, F(1) - the catalytic core - and F(0) - the membrane proton channel. F(1) has five subunits: alpha(3), beta(3), gamma(1), delta(1), epsilon(1). F(0) has four main subunits: a(1), b(1), b'(1) and c(10-14). The alpha and beta chains form an alternating ring which encloses part of the gamma chain. F(1) is attached to F(0) by a central stalk formed by the gamma and epsilon chains, while a peripheral stalk is formed by the delta, b and b' chains.

The protein resides in the cell inner membrane. Its function is as follows. F(1)F(0) ATP synthase produces ATP from ADP in the presence of a proton or sodium gradient. F-type ATPases consist of two structural domains, F(1) containing the extramembraneous catalytic core and F(0) containing the membrane proton channel, linked together by a central stalk and a peripheral stalk. During catalysis, ATP synthesis in the catalytic domain of F(1) is coupled via a rotary mechanism of the central stalk subunits to proton translocation. In terms of biological role, key component of the F(0) channel; it plays a direct role in translocation across the membrane. A homomeric c-ring of between 10-14 subunits forms the central stalk rotor element with the F(1) delta and epsilon subunits. This chain is ATP synthase subunit c 2, found in Cereibacter sphaeroides (strain ATCC 17029 / ATH 2.4.9) (Rhodobacter sphaeroides).